The chain runs to 208 residues: Protein-L-isoaspartate O-methyltransferase (208 aa).

Serine 59 is an active-site residue.

Belongs to the methyltransferase superfamily. L-isoaspartyl/D-aspartyl protein methyltransferase family.

It is found in the cytoplasm. It catalyses the reaction [protein]-L-isoaspartate + S-adenosyl-L-methionine = [protein]-L-isoaspartate alpha-methyl ester + S-adenosyl-L-homocysteine. Functionally, catalyzes the methyl esterification of L-isoaspartyl residues in peptides and proteins that result from spontaneous decomposition of normal L-aspartyl and L-asparaginyl residues. It plays a role in the repair and/or degradation of damaged proteins. In Escherichia fergusonii (strain ATCC 35469 / DSM 13698 / CCUG 18766 / IAM 14443 / JCM 21226 / LMG 7866 / NBRC 102419 / NCTC 12128 / CDC 0568-73), this protein is Protein-L-isoaspartate O-methyltransferase.